The following is a 449-amino-acid chain: NADH-quinone oxidoreductase subunit D (449 aa).

This sequence belongs to the complex I 49 kDa subunit family. In terms of assembly, NDH-1 is composed of 14 different subunits. Subunits NuoB, C, D, E, F, and G constitute the peripheral sector of the complex.

It localises to the cell membrane. The enzyme catalyses a quinone + NADH + 5 H(+)(in) = a quinol + NAD(+) + 4 H(+)(out). In terms of biological role, NDH-1 shuttles electrons from NADH, via FMN and iron-sulfur (Fe-S) centers, to quinones in the respiratory chain. The immediate electron acceptor for the enzyme in this species is believed to be a menaquinone. Couples the redox reaction to proton translocation (for every two electrons transferred, four hydrogen ions are translocated across the cytoplasmic membrane), and thus conserves the redox energy in a proton gradient. This chain is NADH-quinone oxidoreductase subunit D, found in Saccharopolyspora erythraea (strain ATCC 11635 / DSM 40517 / JCM 4748 / NBRC 13426 / NCIMB 8594 / NRRL 2338).